A 341-amino-acid polypeptide reads, in one-letter code: Glyceraldehyde-3-phosphate dehydrogenase 2 (341 aa).

Residues 12–13 (RI), Arg78, and Thr120 contribute to the NAD(+) site. D-glyceraldehyde 3-phosphate is bound by residues 152 to 154 (SCT) and Thr183. Catalysis depends on Cys153, which acts as the Nucleophile. Asn184 lines the NAD(+) pocket. Residues Arg198, 211-212 (TG), and Arg234 contribute to the D-glyceraldehyde 3-phosphate site. Asn313 contributes to the NAD(+) binding site.

This sequence belongs to the glyceraldehyde-3-phosphate dehydrogenase family. As to quaternary structure, homotetramer.

Its subcellular location is the cytoplasm. The catalysed reaction is D-glyceraldehyde 3-phosphate + phosphate + NAD(+) = (2R)-3-phospho-glyceroyl phosphate + NADH + H(+). The protein operates within carbohydrate degradation; glycolysis; pyruvate from D-glyceraldehyde 3-phosphate: step 1/5. In terms of biological role, catalyzes the oxidative phosphorylation of glyceraldehyde 3-phosphate (G3P) to 1,3-bisphosphoglycerate (BPG) using the cofactor NAD. The first reaction step involves the formation of a hemiacetal intermediate between G3P and a cysteine residue, and this hemiacetal intermediate is then oxidized to a thioester, with concomitant reduction of NAD to NADH. The reduced NADH is then exchanged with the second NAD, and the thioester is attacked by a nucleophilic inorganic phosphate to produce BPG. The protein is Glyceraldehyde-3-phosphate dehydrogenase 2 (gapA2) of Staphylococcus epidermidis (strain ATCC 35984 / DSM 28319 / BCRC 17069 / CCUG 31568 / BM 3577 / RP62A).